The primary structure comprises 155 residues: Telokin-like protein 20 homolog (155 aa).

Residues 109–155 (KRAVAPPHHEPEPVPAEEGAVADRAEPESGDAPPSPKKQKLDEREQD) are disordered.

The polypeptide is Telokin-like protein 20 homolog (Orgyia pseudotsugata multicapsid polyhedrosis virus (OpMNPV)).